The chain runs to 399 residues: Acetate kinase (399 aa).

Asparagine 7 is a Mg(2+) binding site. Lysine 14 contributes to the ATP binding site. Arginine 91 contributes to the substrate binding site. Aspartate 148 acts as the Proton donor/acceptor in catalysis. Residues 208–212 and 283–285 each bind ATP; these read HLGNG and DFR. Residue glutamate 384 coordinates Mg(2+).

This sequence belongs to the acetokinase family. In terms of assembly, homodimer. The cofactor is Mg(2+). Mn(2+) is required as a cofactor.

It is found in the cytoplasm. The enzyme catalyses acetate + ATP = acetyl phosphate + ADP. It participates in metabolic intermediate biosynthesis; acetyl-CoA biosynthesis; acetyl-CoA from acetate: step 1/2. In terms of biological role, catalyzes the formation of acetyl phosphate from acetate and ATP. Can also catalyze the reverse reaction. This Dictyoglomus thermophilum (strain ATCC 35947 / DSM 3960 / H-6-12) protein is Acetate kinase.